We begin with the raw amino-acid sequence, 362 residues long: Sulfate/thiosulfate import ATP-binding protein CysA (362 aa).

Residues Ile3–Leu237 enclose the ABC transporter domain. Gly35–Thr42 lines the ATP pocket.

It belongs to the ABC transporter superfamily. Sulfate/tungstate importer (TC 3.A.1.6) family. As to quaternary structure, the complex is composed of two ATP-binding proteins (CysA), two transmembrane proteins (CysT and CysW) and a solute-binding protein (CysP).

The protein localises to the cell inner membrane. The enzyme catalyses sulfate(out) + ATP + H2O = sulfate(in) + ADP + phosphate + H(+). It catalyses the reaction thiosulfate(out) + ATP + H2O = thiosulfate(in) + ADP + phosphate + H(+). Functionally, part of the ABC transporter complex CysAWTP involved in sulfate/thiosulfate import. Responsible for energy coupling to the transport system. This chain is Sulfate/thiosulfate import ATP-binding protein CysA, found in Photorhabdus laumondii subsp. laumondii (strain DSM 15139 / CIP 105565 / TT01) (Photorhabdus luminescens subsp. laumondii).